The chain runs to 514 residues: Cytochrome P450 monooxygenase nodJ (514 aa).

Residues 2–24 (ELIVIIITLAFCILLYGTRWRAA) traverse the membrane as a helical segment. N-linked (GlcNAc...) asparagine glycosylation is found at asparagine 144, asparagine 245, and asparagine 416. Cysteine 432 contacts heme.

This sequence belongs to the cytochrome P450 family. It depends on heme as a cofactor.

Its subcellular location is the membrane. It functions in the pathway secondary metabolite biosynthesis. Cytochrome P450 monooxygenase; part of the gene cluster that mediates the biosynthesis of the indole diterpenes nodulisporic acids (NA). Nodulisporic acid A (NAA) and its chemically modified derivatives are of particular significance because of their highly potent insecticidal activity against blood-feeding arthropods and lack of observable adverse effects on mammals, in particular the tremogenicity associated with the paspaline-derived IDTs is not observed. The geranylgeranyl diphosphate (GGPP) synthase ggs1, localized outside of the cluster, is proposed to catalyze the first step in nodulisporic acid biosynthesis via conversion of farnesyl pyrophosphate and isopentyl pyrophosphate into geranylgeranyl pyrophosphate (GGPP). Condensation of indole-3-glycerol phosphate with GGPP by the prenyl transferase nodC then forms 3-geranylgeranylindole (3-GGI). Epoxidation by the FAD-dependent monooxygenase nodM leads to a single-epoxidized-GGI that is substrate of the terpene cyclase nodB for cyclization to yield emindole SB. The terminal methyl carbon, C28, of emindole SB is then oxidized by the cytochrome P450 monooxygenase nodW to produce nodulisporic acid F (NAF), the pentacyclic core of NAA. NAF is converted to nodulisporic acid E (NAE) via prenylation. This step is probably performed by one of the indole diterpene prenyltransferases nodD1 or nodD2. Several oxidation steps performed by the FAD-linked oxidoreductase nodO and one of the cytochrome P450 monooxygenase nodR, nodX or nodZ further convert NAE to nodulisporic acid D (NAD). NAD is substrate of cytochrome P450 monooxygenase nodJ to produce the precursor of nodulisporic acid C (NAC), converted to NAC by one of the indole diterpene prenyltransferases nodD1 or nodD2. The FAD-dependent monooxygenase nodY2 then oxidizes NAC to nodulisporic acid B (NAB). Finally NAB is converted to NAA by one of the cytochrome P450 monooxygenases nodR, nodX or nodZ. The polypeptide is Cytochrome P450 monooxygenase nodJ (Hypoxylon pulicicidum).